The primary structure comprises 161 residues: Glycine cleavage system H protein 2 (161 aa).

Residues 34-116 (TVTVGVTDIG…YGEGWIAKLK (83 aa)) form the Lipoyl-binding domain. Lys-75 is modified (N6-lipoyllysine).

It belongs to the GcvH family. As to quaternary structure, the glycine cleavage system is composed of four proteins: P, T, L and H. It depends on (R)-lipoate as a cofactor.

In terms of biological role, the glycine cleavage system catalyzes the degradation of glycine. The H protein shuttles the methylamine group of glycine from the P protein to the T protein. This Aquifex aeolicus (strain VF5) protein is Glycine cleavage system H protein 2.